Reading from the N-terminus, the 334-residue chain is Fructose-1,6-bisphosphatase class 1 (334 aa).

Mg(2+) contacts are provided by Glu90, Asp113, Leu115, and Asp116. Substrate contacts are provided by residues 116–119, Asn209, Tyr242, and Lys272; that span reads DGSS. Glu278 lines the Mg(2+) pocket.

It belongs to the FBPase class 1 family. Homotetramer. Mg(2+) is required as a cofactor.

It is found in the cytoplasm. It catalyses the reaction beta-D-fructose 1,6-bisphosphate + H2O = beta-D-fructose 6-phosphate + phosphate. The protein operates within carbohydrate biosynthesis; gluconeogenesis. This chain is Fructose-1,6-bisphosphatase class 1, found in Actinobacillus pleuropneumoniae serotype 7 (strain AP76).